We begin with the raw amino-acid sequence, 344 residues long: Methionine import ATP-binding protein MetN (344 aa).

The ABC transporter domain maps to 2-241; sequence IELQGLSQRF…PQHEVTRAMI (240 aa). ATP is bound at residue 38–45; it reads GRSGAGKS.

Belongs to the ABC transporter superfamily. Methionine importer (TC 3.A.1.24) family. The complex is composed of two ATP-binding proteins (MetN), two transmembrane proteins (MetI) and a solute-binding protein (MetQ).

It is found in the cell inner membrane. The enzyme catalyses L-methionine(out) + ATP + H2O = L-methionine(in) + ADP + phosphate + H(+). It catalyses the reaction D-methionine(out) + ATP + H2O = D-methionine(in) + ADP + phosphate + H(+). Part of the ABC transporter complex MetNIQ involved in methionine import. Responsible for energy coupling to the transport system. This chain is Methionine import ATP-binding protein MetN, found in Cupriavidus metallidurans (strain ATCC 43123 / DSM 2839 / NBRC 102507 / CH34) (Ralstonia metallidurans).